Consider the following 222-residue polypeptide: Peptidyl-prolyl cis-trans isomerase FKBP7 (222 aa).

Positions 1–23 (MPKTMHFLFRFIVFFYLWGLFTA) are cleaved as a signal peptide. N-linked (GlcNAc...) asparagine glycosylation occurs at asparagine 45. A PPIase FKBP-type domain is found at 53–145 (GDLLNAHYDG…IFEIELYAVT (93 aa)). EF-hand domains are found at residues 145–180 (TKGP…EFEK) and 189–222 (YQDA…HDEL). The Ca(2+) site is built by aspartate 158, aspartate 160, aspartate 162, glutamine 164, glutamate 169, aspartate 202, aspartate 204, aspartate 206, and glutamate 213. The short motif at 219 to 222 (HDEL) is the Prevents secretion from ER element.

Glycosylated.

The protein resides in the endoplasmic reticulum lumen. The enzyme catalyses [protein]-peptidylproline (omega=180) = [protein]-peptidylproline (omega=0). In terms of biological role, PPIases accelerate the folding of proteins during protein synthesis. This chain is Peptidyl-prolyl cis-trans isomerase FKBP7 (FKBP7), found in Pongo abelii (Sumatran orangutan).